Here is a 245-residue protein sequence, read N- to C-terminus: Short-chain dehydrogenase/reductase pyiH (245 aa).

NADP(+) is bound by residues Ile18, Arg42, Asp68, and Asn95. Ser150 functions as the Proton donor in the catalytic mechanism.

It belongs to the short-chain dehydrogenases/reductases (SDR) family.

It functions in the pathway mycotoxin biosynthesis. Functionally, short-chain dehydrogenase/reductase; part of the gene cluster that mediates the biosynthesis of the mycotoxin pyrichalasin H, a tyrosine-derived cytochalasan that inhibits the growth of rice seedlings, but also inhibits lymphocyte capping and actin polymerization and alters cell morphology. Pyrichalasin H is indicated as the responsible agent for the genus-specific pathogenicity of M.grisea toward crabgrass. The first step in the pathway is catalyzed by the O-methyltransferase pyiA which methylates free tyrosine to generate the precursor O-methyltyrosine. The hybrid PKS-NRPS pyiS, assisted by the enoyl reductase pyiC, are responsible for fusion of the O-methyltyrosine precursor and the polyketide backbone. The polyketide synthase module (PKS) of pyiS is responsible for the synthesis of the polyketide backbone and the downstream nonribosomal peptide synthetase (NRPS) amidates the carboxyl end of the polyketide with the O-methyltyrosine precursor. As the NRPS A-domain demonstrates substrate tolerance, pyiS can also use phenylalanine, tyrosine and even para-chlorophenylalanine as amino acid precursor, which leads to the production of novel cytochalasans, including halogenated cytochalasans. Because pyiS lacks a designated enoylreductase (ER) domain, the required activity is provided the enoyl reductase pyiC. Reduction by the hydrolyase pyiE leads to 1,5-dihydropyrrolone, which is substrate for dehydration and intra-molecular Diels-Alder cyclization by the Diels-Alderase pyiF to yield the required isoindolone-fused macrocycle. The tailoring cytochrome P450 monooxygenases piyD and piyG catalyze the hydroxylation at C-18 and C-7, respectivily, whereas the short-chain dehydrogenase/reductase pyiH reduces the carbonyl at C-21 in preparation for the transfer of an acetyl group by the acetyltransferase pyiB. These 3 reactions whose order is not clear yet, lead to the production of O-methylpyrichalasin J, a deacetylated pyrichalasin H. Finally, pyiB to converts O-methylpyrichalasin J into the final product pyrichalasin H via acetylation of C-21. The polypeptide is Short-chain dehydrogenase/reductase pyiH (Pyricularia grisea (Crabgrass-specific blast fungus)).